A 228-amino-acid chain; its full sequence is Ribonuclease S-4 (228 aa).

A signal peptide spans 1–27 (MGITGMTYMFTMVLSLIVLIFSASTVG). Glutamine 36 serves as a coordination point for RNA. An intrachain disulfide couples cysteine 42 to cysteine 49. Histidine 60 contacts RNA. Histidine 60 functions as the Proton donor in the catalytic mechanism. A disulfide bridge connects residues cysteine 75 and cysteine 119. Asparagine 87 carries an N-linked (GlcNAc) asparagine glycan. Position 98–99 (98–99 (NV)) interacts with RNA. N-linked (GlcNAc...) asparagine glycosylation occurs at asparagine 101. RNA is bound by residues phenylalanine 108, 111–112 (RE), and 115–116 (KH). Residue glutamate 112 is part of the active site. Histidine 116 serves as the catalytic Proton acceptor. 3 N-linked (GlcNAc...) asparagine glycosylation sites follow: asparagine 144, asparagine 160, and asparagine 175. Intrachain disulfides connect cysteine 183/cysteine 222 and cysteine 199/cysteine 210.

This sequence belongs to the RNase T2 family. Post-translationally, the N-glycans attached at Asn-101, Asn-160 and Asn-175 consist predominantly of disaccharide (GlcNAc-GlcNAc). The N-glycan at 87 is 53% monosaccharide and 47% disaccharide. The N-glycan at Asn-144 contains mannose and xylose.

The protein resides in the secreted. It is found in the extracellular space. The enzyme catalyses a ribonucleotidyl-ribonucleotide-RNA + H2O = a 3'-end 3'-phospho-ribonucleotide-RNA + a 5'-end dephospho-ribonucleoside-RNA + H(+). Functionally, self-incompatibility (SI) is the inherited ability of a flowering plant to prevent self-fertilization by discriminating between self and non-self pollen during pollination. In many species, self-incompatibility is controlled by the single, multiallelic locus S. In Pyrus pyrifolia (Chinese pear), this protein is Ribonuclease S-4.